A 473-amino-acid chain; its full sequence is MTRRLFGTDGIRGTANTDPMTAEMALKVAMATAAQFRRGSHRHVVVIAKDTRLSGYMLEPALTAGFVSMGMDVVLVGPLPTPAVAMLTRSLRADLGVMVSASHNPFHDNGIKLFGPDGYKLSDEMEAAIEARIAADGAAGGPAADLAGPRDLGRASRLEDAPGRYIEQVKASFPRGLRLDGLKIVVDCANGAAYRVAPKVLWELGAEVVPLAVGPDGFNINRDCGATAPAAMRAAVLEHKAHLGLALDGDADRLILADESGTQIDGDQIMALIGRSWAEDGRLKGGGVVATVMSNLGLELFLRDRGLTLVRTPVGDRYVVEHMREYGFNVGGEQSGHIVLSDFATTGDGLLAALQVLAEIQRTGRPASEVLRVFQPLPQLLRNVRFDPAGGVRPLEAAGVQAAIRAGEARLGGRGRVLIRKSGTEPLIRVMAEGEDEGLVASVVADIVAAVEAATVPRAAGEAATVTQVQPAE.

Residue S102 is the Phosphoserine intermediate of the active site. Mg(2+) is bound by residues S102, D248, D250, and D252. S102 is modified (phosphoserine).

The protein belongs to the phosphohexose mutase family. It depends on Mg(2+) as a cofactor. In terms of processing, activated by phosphorylation.

The enzyme catalyses alpha-D-glucosamine 1-phosphate = D-glucosamine 6-phosphate. In terms of biological role, catalyzes the conversion of glucosamine-6-phosphate to glucosamine-1-phosphate. This Rhodospirillum centenum (strain ATCC 51521 / SW) protein is Phosphoglucosamine mutase.